Consider the following 509-residue polypeptide: Maturase K (509 aa).

It belongs to the intron maturase 2 family. MatK subfamily.

It localises to the plastid. It is found in the chloroplast. Usually encoded in the trnK tRNA gene intron. Probably assists in splicing its own and other chloroplast group II introns. In Galbulimima belgraveana (Northern pigeonberry ash), this protein is Maturase K.